The chain runs to 403 residues: Tyrosine--tRNA ligase (403 aa).

A 'HIGH' region motif is present at residues 46-55 (PTAPDLHLGH). The short motif at 230-234 (KMSKS) is the 'KMSKS' region element. Lys233 serves as a coordination point for ATP. The region spanning 342–402 (LFITQILNQA…GKKAYAKVTV (61 aa)) is the S4 RNA-binding domain.

It belongs to the class-I aminoacyl-tRNA synthetase family. TyrS type 2 subfamily. As to quaternary structure, homodimer.

Its subcellular location is the cytoplasm. The enzyme catalyses tRNA(Tyr) + L-tyrosine + ATP = L-tyrosyl-tRNA(Tyr) + AMP + diphosphate + H(+). Functionally, catalyzes the attachment of tyrosine to tRNA(Tyr) in a two-step reaction: tyrosine is first activated by ATP to form Tyr-AMP and then transferred to the acceptor end of tRNA(Tyr). The sequence is that of Tyrosine--tRNA ligase from Psychrobacter arcticus (strain DSM 17307 / VKM B-2377 / 273-4).